A 262-amino-acid chain; its full sequence is Nodulation protein J (262 aa).

An ABC transmembrane type-2 domain is found at 33–259 (ASILGNLAEP…FLSVGLLQRR (227 aa)). Transmembrane regions (helical) follow at residues 35–55 (ILGN…GLGA), 62–82 (GIPY…MISA), 125–145 (ALLA…ASWP), 147–167 (VLFA…LAMI), 177–197 (YFIF…GAVF), and 236–256 (LHIS…VGLL).

It belongs to the ABC-2 integral membrane protein family. Lipooligosaccharide exporter (TC 3.A.1.102) subfamily. The complex is composed of two ATP-binding proteins (NodI) and two transmembrane proteins (NodJ).

It localises to the cell inner membrane. In terms of biological role, part of the ABC transporter complex NodIJ involved in the export of the nodulation factors (Nod factors), the bacterial signal molecules that induce symbiosis and subsequent nodulation induction. Nod factors are LCO (lipo-chitin oligosaccharide), a modified beta-1,4-linked N-acetylglucosamine oligosaccharide. This subunit encodes the transporter. The sequence is that of Nodulation protein J (nodJ) from Sinorhizobium fredii (strain NBRC 101917 / NGR234).